Reading from the N-terminus, the 172-residue chain is Small ribosomal subunit protein uS5 (172 aa).

The 64-residue stretch at 13–76 folds into the S5 DRBM domain; that stretch reads LIEKMVAVNR…DQARRSMIKV (64 aa).

It belongs to the universal ribosomal protein uS5 family. As to quaternary structure, part of the 30S ribosomal subunit. Contacts proteins S4 and S8.

In terms of biological role, with S4 and S12 plays an important role in translational accuracy. Functionally, located at the back of the 30S subunit body where it stabilizes the conformation of the head with respect to the body. The protein is Small ribosomal subunit protein uS5 of Neisseria gonorrhoeae (strain ATCC 700825 / FA 1090).